A 258-amino-acid chain; its full sequence is Imidazole glycerol phosphate synthase subunit HisF (258 aa).

Residues aspartate 11 and aspartate 130 contribute to the active site.

It belongs to the HisA/HisF family. Heterodimer of HisH and HisF.

The protein localises to the cytoplasm. It catalyses the reaction 5-[(5-phospho-1-deoxy-D-ribulos-1-ylimino)methylamino]-1-(5-phospho-beta-D-ribosyl)imidazole-4-carboxamide + L-glutamine = D-erythro-1-(imidazol-4-yl)glycerol 3-phosphate + 5-amino-1-(5-phospho-beta-D-ribosyl)imidazole-4-carboxamide + L-glutamate + H(+). The protein operates within amino-acid biosynthesis; L-histidine biosynthesis; L-histidine from 5-phospho-alpha-D-ribose 1-diphosphate: step 5/9. Functionally, IGPS catalyzes the conversion of PRFAR and glutamine to IGP, AICAR and glutamate. The HisF subunit catalyzes the cyclization activity that produces IGP and AICAR from PRFAR using the ammonia provided by the HisH subunit. This chain is Imidazole glycerol phosphate synthase subunit HisF, found in Xanthomonas campestris pv. campestris (strain 8004).